Consider the following 503-residue polypeptide: Probable cytosol aminopeptidase (503 aa).

Residues Lys-270 and Asp-275 each coordinate Mn(2+). Lys-282 is an active-site residue. Mn(2+) is bound by residues Asp-293, Asp-352, and Glu-354. Arg-356 is a catalytic residue.

It belongs to the peptidase M17 family. Mn(2+) is required as a cofactor.

The protein localises to the cytoplasm. It catalyses the reaction Release of an N-terminal amino acid, Xaa-|-Yaa-, in which Xaa is preferably Leu, but may be other amino acids including Pro although not Arg or Lys, and Yaa may be Pro. Amino acid amides and methyl esters are also readily hydrolyzed, but rates on arylamides are exceedingly low.. It carries out the reaction Release of an N-terminal amino acid, preferentially leucine, but not glutamic or aspartic acids.. Functionally, presumably involved in the processing and regular turnover of intracellular proteins. Catalyzes the removal of unsubstituted N-terminal amino acids from various peptides. This is Probable cytosol aminopeptidase from Klebsiella pneumoniae subsp. pneumoniae (strain ATCC 700721 / MGH 78578).